Consider the following 214-residue polypeptide: Large ribosomal subunit protein uL1 (214 aa).

It belongs to the universal ribosomal protein uL1 family. As to quaternary structure, component of the large ribosomal subunit.

It is found in the cytoplasm. In terms of biological role, component of the large ribosomal subunit. The ribosome is a large ribonucleoprotein complex responsible for the synthesis of proteins in the cell. This Entamoeba histolytica (strain ATCC 30459 / HM-1:IMSS / ABRM) protein is Large ribosomal subunit protein uL1 (RPL10A).